The sequence spans 527 residues: 4-alpha-glucanotransferase (527 aa).

This sequence belongs to the disproportionating enzyme family.

Its subcellular location is the cytoplasm. The enzyme catalyses Transfers a segment of a (1-&gt;4)-alpha-D-glucan to a new position in an acceptor, which may be glucose or a (1-&gt;4)-alpha-D-glucan.. The sequence is that of 4-alpha-glucanotransferase (malQ) from Chlamydia trachomatis serovar D (strain ATCC VR-885 / DSM 19411 / UW-3/Cx).